The sequence spans 579 residues: MMKDEYNSQECMVCSAPADGLHYGAISCRSCNAFFRRTVVEKAEYRCKHTNTCLIDPDGRCACRSCRFTKCIEAGMKIGAVQPRRDPTGSQKERRKRAGGVGEMMSMNNSPLERNGNSFSSDGPTSNSFIVDAIRTDYGFATPRRISTDYSNSPDRYRKYVKIELDDEPIPSTSSAPEKQSCQSSPNDDEQQEFNHLVYAFGEHQRMMQLSFSTFEQFLDEHSNGPKLRRMDPLDVSKLSAVELTGLLYWIEKQQPYGELPVEDRSSLLKRYSVRKLSLDHFYSASKHPEYCARGEFVMNNFTFVPADRTGFELPDDDPHQIQAKREHCRTFAPTFNRFWKNVIRPFVLMKVNDAEVVFLHIMLLWSVTNNEHVTEDTRKVMKQRRDWAMNRLFDWYNEHGTSDPPLRFGQMILLLGEIELICDMHCQDFQVAKLFEFCDMSKFWYETLCYAPCNTNVLKFDPNLLENLKRFTAISVMENNGGLRPFVKTEIKQDPVLYSSPEVIAPESCYNDYQTVDIPVDCNPHTEPVSMDPNLANIDPAVLVFNAHMLPSVMAPLPDDADYHRPQLYHTQSEEVMT.

A DNA-binding region (nuclear receptor) is located at residues 8 to 83; the sequence is SQECMVCSAP…AGMKIGAVQP (76 aa). NR C4-type zinc fingers lie at residues 11-31 and 47-71; these read CMVCSAPADGLHYGAISCRSC and CKHTNTCLIDPDGRCACRSCRFTKC. Disordered stretches follow at residues 82-124 and 168-189; these read QPRR…SDGP and EPIPSTSSAPEKQSCQSSPNDD. Composition is skewed to polar residues over residues 106-124 and 171-186; these read SMNNSPLERNGNSFSSDGP and PSTSSAPEKQSCQSSP. In terms of domain architecture, NR LBD spans 189–452; that stretch reads DEQQEFNHLV…KFWYETLCYA (264 aa).

This sequence belongs to the nuclear hormone receptor family.

Its subcellular location is the nucleus. Orphan nuclear receptor. This Caenorhabditis elegans protein is Nuclear hormone receptor family member nhr-71 (nhr-71).